Reading from the N-terminus, the 298-residue chain is Cholesterol 25-hydroxylase (298 aa).

N-linked (GlcNAc...) asparagine glycosylation occurs at N5. A run of 3 helical transmembrane segments spans residues 38–58 (FFPV…FVVL), 84–104 (LLPC…PVTL), and 124–144 (LLSH…AWHL). The region spanning 128 to 263 (VLICLLLFDT…FTHWDKMLGT (136 aa)) is the Fatty acid hydroxylase domain. The Histidine box-1 motif lies at 142–146 (WHLLH). The short motif at 157–161 (HKVHH) is the Histidine box-2 element. Residue N163 is glycosylated (N-linked (GlcNAc...) asparagine). 2 consecutive transmembrane segments (helical) span residues 167 to 187 (FALA…FFDV) and 190 to 210 (VAML…NIWL). Residues 238 to 244 (HHDLHHS) carry the Histidine box-3 motif.

It belongs to the sterol desaturase family. Fe cation serves as cofactor. N-glycosylated. In terms of tissue distribution, expressed in testicular macrophages at all stages, with the highest level in 10 day old animals.

Its subcellular location is the endoplasmic reticulum membrane. It carries out the reaction cholesterol + AH2 + O2 = 25-hydroxycholesterol + A + H2O. The catalysed reaction is cholesterol + NADPH + O2 + H(+) = 25-hydroxycholesterol + NADP(+) + H2O. Its function is as follows. Catalyzes the formation of 25-hydroxycholesterol from cholesterol, leading to repress cholesterol biosynthetic enzymes. Plays a key role in cell positioning and movement in lymphoid tissues: 25-hydroxycholesterol is an intermediate in biosynthesis of 7-alpha,25-dihydroxycholesterol (7-alpha,25-OHC), an oxysterol that acts as a ligand for the G protein-coupled receptor GPR183/EBI2, a chemotactic receptor for a number of lymphoid cells. May play an important role in regulating lipid metabolism by synthesizing a corepressor that blocks sterol regulatory element binding protein (SREBP) processing. In testis, production of 25-hydroxycholesterol by macrophages plays a role in Leydig cell differentiation. Required to restrain inflammation in macrophages: production of 25-hydroxycholesterol protects macrophages from cholesterol overload, thereby preventing mitochondrial DNA release and subsequent activation of the AIM2 inflammasome. Interferon-stimulated gene which has broad antiviral activities against a wide range of enveloped viruses. Functionally, catalyzes the formation of 25-hydroxycholesterol from cholesterol, leading to repress cholesterol biosynthetic enzymes. Plays a key role in cell positioning and movement in lymphoid tissues: 25-hydroxycholesterol is an intermediate in biosynthesis of 7-alpha,25-dihydroxycholesterol (7-alpha,25-OHC), an oxysterol that acts as a ligand for the G protein-coupled receptor GPR183/EBI2, a chemotactic receptor for a number of lymphoid cells. May play an important role in regulating lipid metabolism by synthesizing a corepressor that blocks sterol regulatory element binding protein (SREBP) processing. As an interferon-stimulated gene, has broad antiviral activities against a wide range of enveloped viruses. Its product, 25-hydroxycholesterol, activates the ER-localized enzyme ACAT to induce internalization of accessible cholesterol on the plasma membrane and restricts virus-host membranes fusion which inhibits virus replication. In testis, production of 25-hydroxycholesterol by macrophages plays a role in Leydig cell differentiation. This Rattus norvegicus (Rat) protein is Cholesterol 25-hydroxylase.